The following is a 186-amino-acid chain: Peptide deformylase (186 aa).

Fe cation is bound by residues Cys-99 and His-141. The active site involves Glu-142. His-145 provides a ligand contact to Fe cation.

This sequence belongs to the polypeptide deformylase family. Fe(2+) is required as a cofactor.

It carries out the reaction N-terminal N-formyl-L-methionyl-[peptide] + H2O = N-terminal L-methionyl-[peptide] + formate. Removes the formyl group from the N-terminal Met of newly synthesized proteins. Requires at least a dipeptide for an efficient rate of reaction. N-terminal L-methionine is a prerequisite for activity but the enzyme has broad specificity at other positions. The chain is Peptide deformylase from Chlamydia caviae (strain ATCC VR-813 / DSM 19441 / 03DC25 / GPIC) (Chlamydophila caviae).